The chain runs to 648 residues: 1-deoxy-D-xylulose-5-phosphate synthase (648 aa).

Thiamine diphosphate is bound by residues H74 and 115–117 (GHA). D146 is a Mg(2+) binding site. Thiamine diphosphate is bound by residues 147–148 (GA), N176, Y292, and E375. N176 serves as a coordination point for Mg(2+).

The protein belongs to the transketolase family. DXPS subfamily. Homodimer. Mg(2+) is required as a cofactor. It depends on thiamine diphosphate as a cofactor.

The enzyme catalyses D-glyceraldehyde 3-phosphate + pyruvate + H(+) = 1-deoxy-D-xylulose 5-phosphate + CO2. It participates in metabolic intermediate biosynthesis; 1-deoxy-D-xylulose 5-phosphate biosynthesis; 1-deoxy-D-xylulose 5-phosphate from D-glyceraldehyde 3-phosphate and pyruvate: step 1/1. Functionally, catalyzes the acyloin condensation reaction between C atoms 2 and 3 of pyruvate and glyceraldehyde 3-phosphate to yield 1-deoxy-D-xylulose-5-phosphate (DXP). The sequence is that of 1-deoxy-D-xylulose-5-phosphate synthase from Synechococcus sp. (strain JA-2-3B'a(2-13)) (Cyanobacteria bacterium Yellowstone B-Prime).